A 100-amino-acid chain; its full sequence is Integration host factor subunit alpha (100 aa).

Belongs to the bacterial histone-like protein family. Heterodimer of an alpha and a beta chain.

This protein is one of the two subunits of integration host factor, a specific DNA-binding protein that functions in genetic recombination as well as in transcriptional and translational control. The sequence is that of Integration host factor subunit alpha from Ectopseudomonas mendocina (strain ymp) (Pseudomonas mendocina).